The primary structure comprises 476 residues: Glycogen synthase (476 aa).

Lys-15 is a binding site for ADP-alpha-D-glucose.

Belongs to the glycosyltransferase 1 family. Bacterial/plant glycogen synthase subfamily.

The enzyme catalyses [(1-&gt;4)-alpha-D-glucosyl](n) + ADP-alpha-D-glucose = [(1-&gt;4)-alpha-D-glucosyl](n+1) + ADP + H(+). The protein operates within glycan biosynthesis; glycogen biosynthesis. Synthesizes alpha-1,4-glucan chains using ADP-glucose. This Actinobacillus succinogenes (strain ATCC 55618 / DSM 22257 / CCUG 43843 / 130Z) protein is Glycogen synthase.